The primary structure comprises 513 residues: ATP synthase subunit beta (513 aa).

The disordered stretch occupies residues 1 to 29 (MATAPATEKKAPAKKAAAPKAAAPKKAAA). Over residues 14-29 (KKAAAPKAAAPKKAAA) the composition is skewed to low complexity. 186-193 (GGAGVGKT) is an ATP binding site.

This sequence belongs to the ATPase alpha/beta chains family. F-type ATPases have 2 components, CF(1) - the catalytic core - and CF(0) - the membrane proton channel. CF(1) has five subunits: alpha(3), beta(3), gamma(1), delta(1), epsilon(1). CF(0) has three main subunits: a(1), b(2) and c(9-12). The alpha and beta chains form an alternating ring which encloses part of the gamma chain. CF(1) is attached to CF(0) by a central stalk formed by the gamma and epsilon chains, while a peripheral stalk is formed by the delta and b chains.

Its subcellular location is the cell inner membrane. The enzyme catalyses ATP + H2O + 4 H(+)(in) = ADP + phosphate + 5 H(+)(out). Produces ATP from ADP in the presence of a proton gradient across the membrane. The catalytic sites are hosted primarily by the beta subunits. This chain is ATP synthase subunit beta, found in Sphingopyxis alaskensis (strain DSM 13593 / LMG 18877 / RB2256) (Sphingomonas alaskensis).